The following is a 319-amino-acid chain: HTH-type transcriptional regulator YidZ (319 aa).

The HTH lysR-type domain occupies 8 to 65 (LDLNLLLCLQLLMQERSVTKAAKRMNVTPSAVSKSLSKLRTWFDDPLFVNTPLGLTPT). The H-T-H motif DNA-binding region spans 25–44 (VTKAAKRMNVTPSAVSKSLS).

This sequence belongs to the LysR transcriptional regulatory family.

Functionally, involved in anaerobic NO protection. This chain is HTH-type transcriptional regulator YidZ, found in Citrobacter koseri (strain ATCC BAA-895 / CDC 4225-83 / SGSC4696).